We begin with the raw amino-acid sequence, 348 residues long: Neuronal growth regulator 1 (348 aa).

The N-terminal stretch at 1-31 (MVLLAQGACCSNQWLAAVLLSLCSCLPAGQS) is a signal peptide. Ig-like C2-type domains lie at 32-128 (VDFP…VHLT), 133-215 (PKIY…RVIV), and 219-307 (PTIQ…LPLN). An intrachain disulfide couples Cys-54 to Cys-112. N-linked (GlcNAc...) asparagine glycans are attached at residues Asn-67 and Asn-149. Cystine bridges form between Cys-154–Cys-197 and Cys-239–Cys-291. Residue Tyr-181 is modified to Phosphotyrosine. Asn-269, Asn-280, Asn-288, and Asn-301 each carry an N-linked (GlcNAc...) asparagine glycan. Residue Gly-318 is the site of GPI-anchor amidated glycine attachment. A propeptide spans 319–348 (SACDLFSCWSLALTLSSVISIFYLKNAILQ) (removed in mature form).

This sequence belongs to the immunoglobulin superfamily. IgLON family. Expressed in brain.

Its subcellular location is the cell membrane. In terms of biological role, may be involved in cell-adhesion. May function as a trans-neural growth-promoting factor in regenerative axon sprouting in the mammalian brain. The chain is Neuronal growth regulator 1 (Negr1) from Mus musculus (Mouse).